A 428-amino-acid polypeptide reads, in one-letter code: Enolase (428 aa).

Residue Gln-163 participates in (2R)-2-phosphoglycerate binding. Glu-205 functions as the Proton donor in the catalytic mechanism. The Mg(2+) site is built by Asp-242, Glu-285, and Asp-312. Lys-337, Arg-366, Ser-367, and Lys-388 together coordinate (2R)-2-phosphoglycerate. Lys-337 (proton acceptor) is an active-site residue.

The protein belongs to the enolase family. Mg(2+) is required as a cofactor.

Its subcellular location is the cytoplasm. The protein localises to the secreted. It is found in the cell surface. The enzyme catalyses (2R)-2-phosphoglycerate = phosphoenolpyruvate + H2O. It functions in the pathway carbohydrate degradation; glycolysis; pyruvate from D-glyceraldehyde 3-phosphate: step 4/5. Functionally, catalyzes the reversible conversion of 2-phosphoglycerate (2-PG) into phosphoenolpyruvate (PEP). It is essential for the degradation of carbohydrates via glycolysis. In Persephonella marina (strain DSM 14350 / EX-H1), this protein is Enolase.